Consider the following 272-residue polypeptide: Putative MgpC-like protein MPN_366 (272 aa).

2 disordered regions span residues Gln65–Ser84 and Gly171–Ser196. The segment covering Asn72–Ser84 has biased composition (low complexity). Positions Gly173–Leu187 are enriched in polar residues.

It belongs to the MgpC family.

The polypeptide is Putative MgpC-like protein MPN_366 (Mycoplasma pneumoniae (strain ATCC 29342 / M129 / Subtype 1) (Mycoplasmoides pneumoniae)).